A 1161-amino-acid chain; its full sequence is Nardilysin (1161 aa).

The first 18 residues, 1–18 (MLRRVAVAAVCVTGRKLR), serve as a signal peptide directing secretion. Disordered regions lie at residues 49–103 (MPGR…IIKS) and 130–218 (VEGK…KKTT). 3 positions are modified to phosphoserine: serine 85, serine 91, and serine 93. Positions 138 to 209 (TDEEEEEEEE…EENELEELEE (72 aa)) are enriched in acidic residues. Zn(2+) is bound at residue histidine 244. Glutamate 247 acts as the Proton acceptor in catalysis. The Zn(2+) site is built by histidine 248 and glutamate 325.

It belongs to the peptidase M16 family. Interacts with BACE1 and NRG1. Zn(2+) is required as a cofactor. As to expression, highly expressed in brain of early postnatal mice but expressed at a lower level in the brains of adult mice. Expression is high in cortical neurons, and lower in neurons in the striatum. Very low expression detected in the corpus callosum. Also expressed in the gray matter in spinal cord and dorsal root ganglia.

It is found in the mitochondrion. The protein resides in the cell projection. The protein localises to the dendrite. The enzyme catalyses Hydrolysis of polypeptides, preferably at -Xaa-|-Arg-Lys-, and less commonly at -Arg-|-Arg-Xaa-, in which Xaa is not Arg or Lys.. Functionally, cleaves peptide substrates on the N-terminus of arginine residues in dibasic pairs. Is a critical activator of BACE1- and ADAM17-mediated pro-neuregulin ectodomain shedding, involved in the positive regulation of axonal maturation and myelination. Required for proper functioning of 2-oxoglutarate dehydrogenase (OGDH). The chain is Nardilysin from Mus musculus (Mouse).